Consider the following 418-residue polypeptide: Probable serine hydroxymethyltransferase (418 aa).

(6S)-5,6,7,8-tetrahydrofolate-binding positions include L118 and 122 to 124 (GHL). K226 bears the N6-(pyridoxal phosphate)lysine mark. 351–353 (SPF) contributes to the (6S)-5,6,7,8-tetrahydrofolate binding site.

The protein belongs to the SHMT family. Homodimer. Pyridoxal 5'-phosphate serves as cofactor.

Its subcellular location is the cytoplasm. It carries out the reaction (6R)-5,10-methylene-5,6,7,8-tetrahydrofolate + glycine + H2O = (6S)-5,6,7,8-tetrahydrofolate + L-serine. The protein operates within one-carbon metabolism; tetrahydrofolate interconversion. Functionally, catalyzes the reversible interconversion of serine and glycine with tetrahydrofolate (THF) serving as the one-carbon carrier. This reaction serves as the major source of one-carbon groups required for the biosynthesis of purines, thymidylate, methionine, and other important biomolecules. The polypeptide is Probable serine hydroxymethyltransferase (Mesomycoplasma hyopneumoniae (strain J / ATCC 25934 / NCTC 10110) (Mycoplasma hyopneumoniae)).